A 323-amino-acid chain; its full sequence is Protoheme IX farnesyltransferase (323 aa).

Helical transmembrane passes span I28–V48, L50–M70, F101–L121, L122–L142, I150–G170, I178–I198, F235–L255, and F282–T302.

It belongs to the UbiA prenyltransferase family. Protoheme IX farnesyltransferase subfamily.

Its subcellular location is the cell inner membrane. The enzyme catalyses heme b + (2E,6E)-farnesyl diphosphate + H2O = Fe(II)-heme o + diphosphate. Its pathway is porphyrin-containing compound metabolism; heme O biosynthesis; heme O from protoheme: step 1/1. In terms of biological role, converts heme B (protoheme IX) to heme O by substitution of the vinyl group on carbon 2 of heme B porphyrin ring with a hydroxyethyl farnesyl side group. This Rippkaea orientalis (strain PCC 8801 / RF-1) (Cyanothece sp. (strain PCC 8801)) protein is Protoheme IX farnesyltransferase.